Here is a 362-residue protein sequence, read N- to C-terminus: Probable dual-specificity RNA methyltransferase RlmN (362 aa).

Glu-105 acts as the Proton acceptor in catalysis. Residues 111 to 344 (HEYGNSICVT…VTIRREQGHD (234 aa)) form the Radical SAM core domain. Cys-118 and Cys-349 are disulfide-bonded. Cys-125, Cys-129, and Cys-132 together coordinate [4Fe-4S] cluster. Residues 175–176 (GE), Ser-207, 230–232 (SLH), and Asn-306 contribute to the S-adenosyl-L-methionine site. Cys-349 acts as the S-methylcysteine intermediate in catalysis.

This sequence belongs to the radical SAM superfamily. RlmN family. Requires [4Fe-4S] cluster as cofactor.

It is found in the cytoplasm. It carries out the reaction adenosine(2503) in 23S rRNA + 2 reduced [2Fe-2S]-[ferredoxin] + 2 S-adenosyl-L-methionine = 2-methyladenosine(2503) in 23S rRNA + 5'-deoxyadenosine + L-methionine + 2 oxidized [2Fe-2S]-[ferredoxin] + S-adenosyl-L-homocysteine. It catalyses the reaction adenosine(37) in tRNA + 2 reduced [2Fe-2S]-[ferredoxin] + 2 S-adenosyl-L-methionine = 2-methyladenosine(37) in tRNA + 5'-deoxyadenosine + L-methionine + 2 oxidized [2Fe-2S]-[ferredoxin] + S-adenosyl-L-homocysteine. Specifically methylates position 2 of adenine 2503 in 23S rRNA and position 2 of adenine 37 in tRNAs. This Bacillus cereus (strain ATCC 14579 / DSM 31 / CCUG 7414 / JCM 2152 / NBRC 15305 / NCIMB 9373 / NCTC 2599 / NRRL B-3711) protein is Probable dual-specificity RNA methyltransferase RlmN.